A 324-amino-acid chain; its full sequence is Hydroxyacylglutathione hydrolase 2, mitochondrial (324 aa).

The N-terminal 64 residues, 1 to 64 (MQTISKASSA…KSIRVSKFCS (64 aa)), are a transit peptide targeting the mitochondrion. Zn(2+) contacts are provided by His124 and His126. Positions 128 and 129 each coordinate Fe cation. Positions 182 and 201 each coordinate Zn(2+). Fe cation-binding residues include Asp201 and His239.

Belongs to the metallo-beta-lactamase superfamily. Glyoxalase II family. As to quaternary structure, monomer. Fe(3+) serves as cofactor. Fe(2+) is required as a cofactor. The cofactor is Zn(2+).

The protein localises to the mitochondrion. The catalysed reaction is an S-(2-hydroxyacyl)glutathione + H2O = a 2-hydroxy carboxylate + glutathione + H(+). The protein operates within secondary metabolite metabolism; methylglyoxal degradation; (R)-lactate from methylglyoxal: step 2/2. Functionally, thiolesterase that catalyzes the hydrolysis of S-D-lactoyl-glutathione to form glutathione and D-lactic acid. The sequence is that of Hydroxyacylglutathione hydrolase 2, mitochondrial from Arabidopsis thaliana (Mouse-ear cress).